The sequence spans 101 residues: UPF0125 protein VC_0850 (101 aa).

It belongs to the UPF0125 (RnfH) family.

This chain is UPF0125 protein VC_0850, found in Vibrio cholerae serotype O1 (strain ATCC 39315 / El Tor Inaba N16961).